Consider the following 57-residue polypeptide: Sec-independent protein translocase protein TatA (57 aa).

The chain crosses the membrane as a helical span at residues 1–21 (MGISVWQLLIILLIVVMLFGT). Residues 37-57 (GFRKSVSDGETTTQAEASSRS) form a disordered region. Polar residues predominate over residues 44–57 (DGETTTQAEASSRS).

It belongs to the TatA/E family. The Tat system comprises two distinct complexes: a TatABC complex, containing multiple copies of TatA, TatB and TatC subunits, and a separate TatA complex, containing only TatA subunits. Substrates initially bind to the TatABC complex, which probably triggers association of the separate TatA complex to form the active translocon.

It localises to the cell inner membrane. Functionally, part of the twin-arginine translocation (Tat) system that transports large folded proteins containing a characteristic twin-arginine motif in their signal peptide across membranes. TatA could form the protein-conducting channel of the Tat system. The protein is Sec-independent protein translocase protein TatA of Stutzerimonas stutzeri (Pseudomonas stutzeri).